A 146-amino-acid chain; its full sequence is UPF0178 protein BcerKBAB4_2842 (146 aa).

Belongs to the UPF0178 family.

The polypeptide is UPF0178 protein BcerKBAB4_2842 (Bacillus mycoides (strain KBAB4) (Bacillus weihenstephanensis)).